The chain runs to 212 residues: Methylthioribulose-1-phosphate dehydratase (212 aa).

Zn(2+)-binding residues include histidine 97 and histidine 99.

Belongs to the aldolase class II family. MtnB subfamily. As to quaternary structure, homotetramer. Zn(2+) is required as a cofactor.

The catalysed reaction is 5-(methylsulfanyl)-D-ribulose 1-phosphate = 5-methylsulfanyl-2,3-dioxopentyl phosphate + H2O. Its pathway is amino-acid biosynthesis; L-methionine biosynthesis via salvage pathway; L-methionine from S-methyl-5-thio-alpha-D-ribose 1-phosphate: step 2/6. Its function is as follows. Catalyzes the dehydration of methylthioribulose-1-phosphate (MTRu-1-P) into 2,3-diketo-5-methylthiopentyl-1-phosphate (DK-MTP-1-P). The sequence is that of Methylthioribulose-1-phosphate dehydratase from Bacillus mycoides (strain KBAB4) (Bacillus weihenstephanensis).